Consider the following 67-residue polypeptide: Major cold shock protein (67 aa).

Residues 4–63 enclose the CSD domain; that stretch reads GTVKWFNAEKGFGFISTENGQDVFAHFSAIQTSGFKTLEEGQKVAFDVEEGQRGPQAVNI.

Homodimer.

It localises to the cytoplasm. The protein is Major cold shock protein (cspA) of Streptococcus pyogenes serotype M6 (strain ATCC BAA-946 / MGAS10394).